A 288-amino-acid chain; its full sequence is Phenazine biosynthesis-like domain-containing protein 1 (288 aa).

Glutamate 46 is a catalytic residue.

It belongs to the PhzF family.

This Mus musculus (Mouse) protein is Phenazine biosynthesis-like domain-containing protein 1 (Pbld1).